We begin with the raw amino-acid sequence, 390 residues long: Homeobox protein Meis1 (390 aa).

Residues 108–192 enclose the MEIS N-terminal domain; it reads GGDVCSSESF…IDLVIDDREG (85 aa). The span at 190-202 shows a compositional bias: basic and acidic residues; the sequence is REGGSKSDSEDVT. Residues 190–279 form a disordered region; it reads REGGSKSDSE…KKRHKKRGIF (90 aa). Over residues 203 to 213 the composition is skewed to polar residues; the sequence is RSANLTDQPSW. A DNA-binding region (homeobox; TALE-type) is located at residues 272 to 334; it reads RHKKRGIFPK…NARRRIVQPM (63 aa). Positions 299–329 are interaction with DNA; that stretch reads YPSEEQKKQLAQDTGLTILQVNNWFINARRR. Residues 335 to 390 form a required for transcriptional activation region; it reads IDQSNRAVSQGTPYNPDGQPMGGFVMDGQQHMGIRAPGPMSGMGMNMGMEGQWHYM.

Belongs to the TALE/MEIS homeobox family. Interacts with the N-terminal region of PBX1 to form a heterodimer which binds DNA including a cAMP-responsive sequence in CYP17. Also forms heterodimers with PBX2. Forms heterotrimers with PBX1 or PBX2 and a number of HOX proteins including HOXA9, HOXD4 and HOXD9 where it acts as a non-DNA-binding partner. Also forms heterotrimers with PBX1 and HOX proteins including HOXD9 and HOXD10 where PBX1 is the non-DNA-binding partner. Heterodimer with DLX3. Heterodimer with HOXB13. As to expression, expressed at high levels in the lung with lower levels detected in the heart and brain. Expressed in pancreatic islets (beta-cells and non-beta-cells).

The protein localises to the nucleus. Its function is as follows. Acts as a transcriptional regulator of PAX6. Also acts as a transcriptional activator of PF4 in complex with PBX1 or PBX2. Required for hematopoiesis, megakaryocyte lineage development and vascular patterning. May function as a cofactor for HOXA7 and HOXA9 in the induction of myeloid leukemias. In Mus musculus (Mouse), this protein is Homeobox protein Meis1 (Meis1).